Here is a 243-residue protein sequence, read N- to C-terminus: tRNA (guanine-N(1)-)-methyltransferase (243 aa).

S-adenosyl-L-methionine-binding positions include G108 and 127 to 132; that span reads LGDFVL.

Belongs to the RNA methyltransferase TrmD family. As to quaternary structure, homodimer.

It localises to the cytoplasm. It catalyses the reaction guanosine(37) in tRNA + S-adenosyl-L-methionine = N(1)-methylguanosine(37) in tRNA + S-adenosyl-L-homocysteine + H(+). Specifically methylates guanosine-37 in various tRNAs. The sequence is that of tRNA (guanine-N(1)-)-methyltransferase from Streptococcus equi subsp. zooepidemicus (strain MGCS10565).